The sequence spans 252 residues: Curing of [URE3] protein 1 (252 aa).

The protein resides in the nucleus. Its function is as follows. Involved in the curing of prion [URE3]. Nuclear localization of this protein may suggest a role in transcription regulation, so it might exert an effect on [URE3] through known prion-curing chaperones or BTN2. The polypeptide is Curing of [URE3] protein 1 (CUR1) (Saccharomyces cerevisiae (strain ATCC 204508 / S288c) (Baker's yeast)).